We begin with the raw amino-acid sequence, 68 residues long: Coiled-coil domain-containing protein 179 (68 aa).

The disordered stretch occupies residues 11 to 68 (SQVNPEGPRQHHPSEVTERQLANKRIQNMQHLKKEKRRLNKRFSRPSPIPEPGLLWSS). Residues 18–28 (PRQHHPSEVTE) are compositionally biased toward basic and acidic residues. Residues 27–53 (TERQLANKRIQNMQHLKKEKRRLNKRF) are a coiled coil. Over residues 41 to 54 (HLKKEKRRLNKRFS) the composition is skewed to basic residues.

The sequence is that of Coiled-coil domain-containing protein 179 (CCDC179) from Homo sapiens (Human).